The sequence spans 261 residues: Ribonuclease HII (261 aa).

In terms of domain architecture, RNase H type-2 spans 71 to 260; sequence HYIAGVDEVG…LHKYRHNTLL (190 aa). Residues Asp-77, Glu-78, and Asp-169 each coordinate a divalent metal cation.

The protein belongs to the RNase HII family. Mn(2+) is required as a cofactor. Mg(2+) serves as cofactor.

It is found in the cytoplasm. The catalysed reaction is Endonucleolytic cleavage to 5'-phosphomonoester.. Its function is as follows. Endonuclease that specifically degrades the RNA of RNA-DNA hybrids. This chain is Ribonuclease HII, found in Oceanobacillus iheyensis (strain DSM 14371 / CIP 107618 / JCM 11309 / KCTC 3954 / HTE831).